A 264-amino-acid polypeptide reads, in one-letter code: Glutamate racemase (264 aa).

Residues aspartate 9–serine 10 and tyrosine 41–glycine 42 each bind substrate. Residue cysteine 72 is the Proton donor/acceptor of the active site. Asparagine 73–threonine 74 lines the substrate pocket. Catalysis depends on cysteine 183, which acts as the Proton donor/acceptor. Residue threonine 184–histidine 185 coordinates substrate.

Belongs to the aspartate/glutamate racemases family.

It carries out the reaction L-glutamate = D-glutamate. The protein operates within cell wall biogenesis; peptidoglycan biosynthesis. Its function is as follows. Provides the (R)-glutamate required for cell wall biosynthesis. In Geobacillus kaustophilus (strain HTA426), this protein is Glutamate racemase.